The following is a 183-amino-acid chain: Inosine triphosphate pyrophosphatase (183 aa).

Residue 8–13 (TGNKNK) participates in ITP binding. E36 lines the Mg(2+) pocket. ITP contacts are provided by residues K48, 64–65 (DT), K81, 140–143 (FGWD), K161, and 166–167 (HR).

Belongs to the HAM1 NTPase family. In terms of assembly, homodimer. It depends on Mg(2+) as a cofactor. Mn(2+) serves as cofactor.

The protein resides in the cytoplasm. The protein localises to the nucleus. It carries out the reaction ITP + H2O = IMP + diphosphate + H(+). The enzyme catalyses dITP + H2O = dIMP + diphosphate + H(+). It catalyses the reaction XTP + H2O = XMP + diphosphate + H(+). Its function is as follows. Pyrophosphatase that hydrolyzes non-canonical purine nucleotides such as inosine triphosphate (ITP), deoxyinosine triphosphate (dITP) or xanthosine 5'-triphosphate (XTP) to their respective monophosphate derivatives. The enzyme does not distinguish between the deoxy- and ribose forms. Probably excludes non-canonical purines from RNA and DNA precursor pools, thus preventing their incorporation into RNA and DNA and avoiding chromosomal lesions. The chain is Inosine triphosphate pyrophosphatase from Ajellomyces capsulatus (strain G186AR / H82 / ATCC MYA-2454 / RMSCC 2432) (Darling's disease fungus).